A 123-amino-acid polypeptide reads, in one-letter code: Large ribosomal subunit protein uL14c (123 aa).

It belongs to the universal ribosomal protein uL14 family. As to quaternary structure, part of the 50S ribosomal subunit.

The protein localises to the plastid. Its subcellular location is the chloroplast. Binds to 23S rRNA. The protein is Large ribosomal subunit protein uL14c of Brachypodium distachyon (Purple false brome).